A 779-amino-acid polypeptide reads, in one-letter code: Transcriptional regulator QRICH1 (779 aa).

Methionine 1 carries the post-translational modification N-acetylmethionine. Residues 6–48 (ENTISFEEYIRVKARSVPQHRMKEFLDSLASKGPEALQEFQQT) enclose the CARD domain. 2 disordered regions span residues 141–163 (QGQA…PSPS) and 219–242 (ALSP…TASV). Serine 346 is subject to Phosphoserine. Residues lysine 354 and lysine 359 each participate in a glycyl lysine isopeptide (Lys-Gly) (interchain with G-Cter in SUMO2) cross-link. Residues 420–430 (QQQPQQQTPQE) are compositionally biased toward low complexity. Residues 420–443 (QQQPQQQTPQEQTPPPPQQQQQQQ) are disordered. Serine 467 carries the phosphoserine modification.

The protein resides in the nucleus. It localises to the cytoplasm. Its subcellular location is the cell membrane. In terms of biological role, transcriptional regulator that acts as a mediator of the integrated stress response (ISR) through transcriptional control of protein homeostasis under conditions of ER stress. Controls the outcome of the unfolded protein response (UPR), an ER-stress response pathway that either promotes recovery of ER homeostasis and cell survival, or triggers the terminal UPR which elicits programmed cell death when ER stress is prolonged and unresolved. ER stress induces QRICH1 translation by a ribosome translation re-initiation mechanism in response to EIF2S1/eIF-2-alpha phosphorylation, and stress-induced QRICH1 regulates a transcriptional program associated with protein translation, protein secretion-mediated proteotoxicity and cell death during the terminal UPR. May cooperate with ATF4 transcription factor signaling to regulate ER homeostasis which is critical for cell viability. Up-regulates CASP3/caspase-3 activity in epithelial cells under ER stress. Central regulator of proteotoxicity associated with ER stress-mediated inflammatory diseases in the intestines and liver. Involved in chondrocyte hypertrophy, a process required for normal longitudinal bone growth. The protein is Transcriptional regulator QRICH1 (QRICH1) of Bos taurus (Bovine).